A 196-amino-acid chain; its full sequence is Nitrogen regulatory protein P-II homolog (196 aa).

The transit peptide at 1 to 61 (MAASMTKPIS…NNSRVLPVVS (61 aa)) directs the protein to the chloroplast. Residues 108–112 (GFGAQ) and 161–164 (GDGK) each bind ATP. G110 serves as a coordination point for Mg(2+).

This sequence belongs to the P(II) protein family. In terms of assembly, homodimer. Interacts with NAGK. Interaction with NAGK is dependent of MgATP and inhibited by 2-oxoglutarate, arginine, glutamate, citrate, and oxaloacetate.

It is found in the plastid. The protein resides in the chloroplast. Functionally, participates in sensing carbon and organic nitrogen status and regulates some steps of primary carbon and nitrogen metabolism. Required for nitrite uptake in chloroplasts and regulates arginine biosynthesis through interaction with acetylglutamate kinase (NAGK) in chloroplasts. Regulates fatty acids synthesis in chloroplasts by interacting with the acetyl-CoA carboxylase complex and inhibiting acetyl-CoA carboxylase (ACCase) activity. This is Nitrogen regulatory protein P-II homolog (GLB1) from Arabidopsis thaliana (Mouse-ear cress).